A 322-amino-acid chain; its full sequence is Phosphatidylserine decarboxylase proenzyme (322 aa).

Residues Asp-90, His-147, and Ser-254 each act as charge relay system; for autoendoproteolytic cleavage activity in the active site. Catalysis depends on Ser-254, which acts as the Schiff-base intermediate with substrate; via pyruvic acid; for decarboxylase activity. The residue at position 254 (Ser-254) is a Pyruvic acid (Ser); by autocatalysis. The tract at residues 293–322 (PDAEPAPLPAEEIEAEHDASPLVDDKKDQV) is disordered. The span at 308–322 (EHDASPLVDDKKDQV) shows a compositional bias: basic and acidic residues.

Belongs to the phosphatidylserine decarboxylase family. PSD-B subfamily. Prokaryotic type I sub-subfamily. Heterodimer of a large membrane-associated beta subunit and a small pyruvoyl-containing alpha subunit. It depends on pyruvate as a cofactor. Post-translationally, is synthesized initially as an inactive proenzyme. Formation of the active enzyme involves a self-maturation process in which the active site pyruvoyl group is generated from an internal serine residue via an autocatalytic post-translational modification. Two non-identical subunits are generated from the proenzyme in this reaction, and the pyruvate is formed at the N-terminus of the alpha chain, which is derived from the carboxyl end of the proenzyme. The autoendoproteolytic cleavage occurs by a canonical serine protease mechanism, in which the side chain hydroxyl group of the serine supplies its oxygen atom to form the C-terminus of the beta chain, while the remainder of the serine residue undergoes an oxidative deamination to produce ammonia and the pyruvoyl prosthetic group on the alpha chain. During this reaction, the Ser that is part of the protease active site of the proenzyme becomes the pyruvoyl prosthetic group, which constitutes an essential element of the active site of the mature decarboxylase.

Its subcellular location is the cell membrane. It carries out the reaction a 1,2-diacyl-sn-glycero-3-phospho-L-serine + H(+) = a 1,2-diacyl-sn-glycero-3-phosphoethanolamine + CO2. It participates in phospholipid metabolism; phosphatidylethanolamine biosynthesis; phosphatidylethanolamine from CDP-diacylglycerol: step 2/2. Its function is as follows. Catalyzes the formation of phosphatidylethanolamine (PtdEtn) from phosphatidylserine (PtdSer). The protein is Phosphatidylserine decarboxylase proenzyme of Escherichia coli O9:H4 (strain HS).